Consider the following 419-residue polypeptide: Glutamyl-tRNA reductase (419 aa).

Substrate is bound by residues 49–52 (TCNR), Ser-107, 112–114 (EPQ), and Gln-118. Cys-50 functions as the Nucleophile in the catalytic mechanism. Residue 187–192 (GAGETI) coordinates NADP(+).

This sequence belongs to the glutamyl-tRNA reductase family. In terms of assembly, homodimer.

The catalysed reaction is (S)-4-amino-5-oxopentanoate + tRNA(Glu) + NADP(+) = L-glutamyl-tRNA(Glu) + NADPH + H(+). The protein operates within porphyrin-containing compound metabolism; protoporphyrin-IX biosynthesis; 5-aminolevulinate from L-glutamyl-tRNA(Glu): step 1/2. Functionally, catalyzes the NADPH-dependent reduction of glutamyl-tRNA(Glu) to glutamate 1-semialdehyde (GSA). The protein is Glutamyl-tRNA reductase of Vibrio vulnificus (strain CMCP6).